A 224-amino-acid polypeptide reads, in one-letter code: UPF0758 protein PSHAa2643 (224 aa).

Residues 102-224 (IFNSPNAVYD…CVSFAERGLI (123 aa)) form the MPN domain. His173, His175, and Asp186 together coordinate Zn(2+). A JAMM motif motif is present at residues 173 to 186 (HNHPSGIAEPSQAD).

This sequence belongs to the UPF0758 family.

The protein is UPF0758 protein PSHAa2643 of Pseudoalteromonas translucida (strain TAC 125).